Here is a 361-residue protein sequence, read N- to C-terminus: Histidine biosynthesis bifunctional protein HisB (361 aa).

Positions 1 to 172 (MSQPTLFIDR…PKTTACERPP (172 aa)) are histidinol-phosphatase. Residue Asp9 is the Nucleophile of the active site. Positions 9 and 11 each coordinate Mg(2+). The active-site Proton donor is the Asp11. Residues Cys92, His94, Cys100, and Cys102 each coordinate Zn(2+). Asp129 is a Mg(2+) binding site. The tract at residues 173–361 (RYAEVVRTTK…NELPSSKGVL (189 aa)) is imidazoleglycerol-phosphate dehydratase.

In the N-terminal section; belongs to the histidinol-phosphatase family. The protein in the C-terminal section; belongs to the imidazoleglycerol-phosphate dehydratase family. Mg(2+) serves as cofactor. Requires Zn(2+) as cofactor.

The protein resides in the cytoplasm. It carries out the reaction D-erythro-1-(imidazol-4-yl)glycerol 3-phosphate = 3-(imidazol-4-yl)-2-oxopropyl phosphate + H2O. The catalysed reaction is L-histidinol phosphate + H2O = L-histidinol + phosphate. The protein operates within amino-acid biosynthesis; L-histidine biosynthesis; L-histidine from 5-phospho-alpha-D-ribose 1-diphosphate: step 6/9. It functions in the pathway amino-acid biosynthesis; L-histidine biosynthesis; L-histidine from 5-phospho-alpha-D-ribose 1-diphosphate: step 8/9. The chain is Histidine biosynthesis bifunctional protein HisB from Actinobacillus pleuropneumoniae serotype 7 (strain AP76).